Consider the following 76-residue polypeptide: Translational regulator CsrA (76 aa).

The protein belongs to the CsrA/RsmA family. As to quaternary structure, homodimer; the beta-strands of each monomer intercalate to form a hydrophobic core, while the alpha-helices form wings that extend away from the core.

It is found in the cytoplasm. In terms of biological role, a translational regulator that binds mRNA to regulate translation initiation and/or mRNA stability. Usually binds in the 5'-UTR at or near the Shine-Dalgarno sequence preventing ribosome-binding, thus repressing translation. Its main target seems to be the major flagellin gene, while its function is anatagonized by FliW. This is Translational regulator CsrA from Pseudothermotoga lettingae (strain ATCC BAA-301 / DSM 14385 / NBRC 107922 / TMO) (Thermotoga lettingae).